The sequence spans 200 residues: Holliday junction resolvase RecU (200 aa).

4 residues coordinate Mg(2+): threonine 85, aspartate 87, glutamate 100, and glutamine 119.

It belongs to the RecU family. Requires Mg(2+) as cofactor.

The protein localises to the cytoplasm. It carries out the reaction Endonucleolytic cleavage at a junction such as a reciprocal single-stranded crossover between two homologous DNA duplexes (Holliday junction).. Its function is as follows. Endonuclease that resolves Holliday junction intermediates in genetic recombination. Cleaves mobile four-strand junctions by introducing symmetrical nicks in paired strands. Promotes annealing of linear ssDNA with homologous dsDNA. Required for DNA repair, homologous recombination and chromosome segregation. The sequence is that of Holliday junction resolvase RecU from Bacillus cytotoxicus (strain DSM 22905 / CIP 110041 / 391-98 / NVH 391-98).